We begin with the raw amino-acid sequence, 119 residues long: Ribonuclease P protein component (119 aa).

This sequence belongs to the RnpA family. As to quaternary structure, consists of a catalytic RNA component (M1 or rnpB) and a protein subunit.

The enzyme catalyses Endonucleolytic cleavage of RNA, removing 5'-extranucleotides from tRNA precursor.. RNaseP catalyzes the removal of the 5'-leader sequence from pre-tRNA to produce the mature 5'-terminus. It can also cleave other RNA substrates such as 4.5S RNA. The protein component plays an auxiliary but essential role in vivo by binding to the 5'-leader sequence and broadening the substrate specificity of the ribozyme. The sequence is that of Ribonuclease P protein component from Listeria monocytogenes serotype 4b (strain CLIP80459).